We begin with the raw amino-acid sequence, 233 residues long: Small ribosomal subunit protein uS2 (233 aa).

The protein belongs to the universal ribosomal protein uS2 family.

This is Small ribosomal subunit protein uS2 from Bacillus cytotoxicus (strain DSM 22905 / CIP 110041 / 391-98 / NVH 391-98).